Consider the following 458-residue polypeptide: Bifunctional thioredoxin reductase/thioredoxin (458 aa).

Positions 1–321 are thioredoxin reductase; it reads MNTTPSAHET…LAEHAGSKAN (321 aa). Residues 19 to 22, 41 to 48, N57, and V90 each bind FAD; these read SGPA and EGTSFGGA. A disulfide bond links C142 and C145. Residues S163, H182, R188, I245, and Y265 each contribute to the NADP(+) site. Residues D285 and 292–295 each bind FAD; that span reads RQAI. NADP(+) is bound at residue R292. The segment at 322 to 347 is linker; sequence ETTEETGDVDSTDTTDWSTAMTDAKN. In terms of domain architecture, Thioredoxin spans 341 to 455; it reads AMTDAKNAGV…LLRDLSDVVP (115 aa). C379 and C382 form a disulfide bridge.

The protein in the N-terminal section; belongs to the class-II pyridine nucleotide-disulfide oxidoreductase family. Homodimer. Requires FAD as cofactor.

The protein resides in the cytoplasm. It catalyses the reaction [thioredoxin]-dithiol + NADP(+) = [thioredoxin]-disulfide + NADPH + H(+). This is Bifunctional thioredoxin reductase/thioredoxin (trxB/A) from Mycobacterium leprae (strain TN).